The sequence spans 253 residues: Probable transcriptional regulatory protein Tlet_1011 (253 aa).

The protein belongs to the TACO1 family.

It is found in the cytoplasm. The polypeptide is Probable transcriptional regulatory protein Tlet_1011 (Pseudothermotoga lettingae (strain ATCC BAA-301 / DSM 14385 / NBRC 107922 / TMO) (Thermotoga lettingae)).